The chain runs to 219 residues: Probable GTP-binding protein EngB (219 aa).

In terms of domain architecture, EngB-type G spans 24–207 (VQPEIAFAGR…HELIESWLRP (184 aa)). GTP-binding positions include 32–39 (GRSNAGKS), 59–63 (GRTQH), 81–84 (DLPG), 148–151 (TKCD), and 186–188 (FSA). Mg(2+)-binding residues include Ser39 and Thr61.

This sequence belongs to the TRAFAC class TrmE-Era-EngA-EngB-Septin-like GTPase superfamily. EngB GTPase family. It depends on Mg(2+) as a cofactor.

Functionally, necessary for normal cell division and for the maintenance of normal septation. The polypeptide is Probable GTP-binding protein EngB (Burkholderia cenocepacia (strain HI2424)).